A 395-amino-acid polypeptide reads, in one-letter code: MSLSIGMVAGEPSGDLLAGRIIGGLRAGAPDVHCAGIGGPQMQAQGFEAWHPMHALTVFGYIDALKRIPSLLSIYGQTKQRMLAERPAAFVGIDAPDFNLRLELQLRQAGIPTVHFVGPSIWAWRYERIHKIRAAVSHMLVLFPFEEEIYQKEGIPVTYVGHPLAGVIPMRPDRAAARLRLNLDVGERVLAILPGSRSSEIRTLAPRFLQAAQLLQARDPALCCVVPMVNPQRRAEFEQILAQYPVQGLRCITAEDVQGNGATPVAWSVMEAADAVLVASGTATLETALYKRPMVISYVLTPWMRRIMAWKSGQQRPYLPWVGLPNVLLKDFAVPELLQDDATPEKLAEAAWTALTDKDNAARIEARFTAMHEELLRDTPALAAKAILEVAHGAG.

Belongs to the LpxB family.

The catalysed reaction is a lipid X + a UDP-2-N,3-O-bis[(3R)-3-hydroxyacyl]-alpha-D-glucosamine = a lipid A disaccharide + UDP + H(+). It functions in the pathway bacterial outer membrane biogenesis; LPS lipid A biosynthesis. Functionally, condensation of UDP-2,3-diacylglucosamine and 2,3-diacylglucosamine-1-phosphate to form lipid A disaccharide, a precursor of lipid A, a phosphorylated glycolipid that anchors the lipopolysaccharide to the outer membrane of the cell. This Bordetella avium (strain 197N) protein is Lipid-A-disaccharide synthase.